Here is a 226-residue protein sequence, read N- to C-terminus: UPF0111 protein HI_1603 (226 aa).

It belongs to the UPF0111 family.

This is UPF0111 protein HI_1603 from Haemophilus influenzae (strain ATCC 51907 / DSM 11121 / KW20 / Rd).